We begin with the raw amino-acid sequence, 450 residues long: MTPTPGEADLTNTPAPRARRSVLSRGSWSETARIAGILRKETVGGAVLLVASAVALVWANSPWAESYFALRDLKIGAEPFGLHLNLTLGTWAADGLLAVFFLVVGLELKREFVAGDLRDPARAALPMAAAVGGMVVPALIFVAVTAPVGDGATRGWAIPTATDIAFAVAVLAVISTHLPAALRTFLLTLAVVDDLLAVTVIAVFYTDEINLTALGLSIVPLALFALCVQRRIRSWWLLLPLGVATWVLVHESGVHATVAGVLLGFTVPVLRSVAAGGPEAGPGLAEHFEHRLRPLSAGVAVPVFAFFAAGVAIGGVSGLTRALSDPITLGIILGLVVGKPVGIFLTTRVLTAVTRANLDDALRWIDVFGVALLAGIGFTVSLLIGDLAYGLGSDRDDFVKVGVLTGSLVAALIAAVLLRVRNRHYRAVWLQETADTDRDGVPDVYQSQRD.

The next 12 membrane-spanning stretches (helical) occupy residues 43 to 63, 86 to 106, 124 to 144, 155 to 175, 185 to 205, 208 to 228, 234 to 254, 258 to 278, 299 to 319, 326 to 346, 364 to 384, and 398 to 418; these read VGGA…NSPW, LTLG…VVGL, ALPM…FVAV, GWAI…AVIS, FLLT…AVFY, EINL…ALCV, SWWL…ESGV, VAGV…AGGP, VAVP…VSGL, PITL…IFLT, WIDV…SLLI, and FVKV…AVLL.

The protein belongs to the NhaA Na(+)/H(+) (TC 2.A.33) antiporter family.

It localises to the cell membrane. The enzyme catalyses Na(+)(in) + 2 H(+)(out) = Na(+)(out) + 2 H(+)(in). Na(+)/H(+) antiporter that extrudes sodium in exchange for external protons. This Mycobacterium sp. (strain JLS) protein is Na(+)/H(+) antiporter NhaA 2.